The primary structure comprises 409 residues: 2-methylfumaryl-CoA isomerase (409 aa).

D165 (nucleophile) is an active-site residue.

Belongs to the CoA-transferase III family. Mesaconyl-CoA isomerase subfamily. Homodimer.

It carries out the reaction 2-methylfumaryl-CoA = 3-methylfumaryl-CoA. With respect to regulation, partially inhibited by hydroxylamine. Its function is as follows. Involved in the glyoxylate assimilation cycle used to regenerate acetyl-CoA and produce pyruvate as universal precursor for biosynthesis. This reaction involves an intramolecular CoA transferase that catalyzes the reversible transfer of the CoA moiety from the C1-carboxyl group of mesaconyl-CoA to the C4-carboxyl group. It does not require free mesaconate as CoA acceptor. In Chloroflexus aurantiacus (strain ATCC 29366 / DSM 635 / J-10-fl), this protein is 2-methylfumaryl-CoA isomerase (mct).